The chain runs to 339 residues: Undecaprenyl-phosphate 4-deoxy-4-formamido-L-arabinose transferase (339 aa).

Helical transmembrane passes span 235–255 (LSII…MLIV) and 270–290 (FVLF…MGLL).

Belongs to the glycosyltransferase 2 family.

Its subcellular location is the cell inner membrane. The catalysed reaction is UDP-4-deoxy-4-formamido-beta-L-arabinose + di-trans,octa-cis-undecaprenyl phosphate = 4-deoxy-4-formamido-alpha-L-arabinopyranosyl di-trans,octa-cis-undecaprenyl phosphate + UDP. Its pathway is glycolipid biosynthesis; 4-amino-4-deoxy-alpha-L-arabinose undecaprenyl phosphate biosynthesis; 4-amino-4-deoxy-alpha-L-arabinose undecaprenyl phosphate from UDP-4-deoxy-4-formamido-beta-L-arabinose and undecaprenyl phosphate: step 1/2. It functions in the pathway bacterial outer membrane biogenesis; lipopolysaccharide biosynthesis. Its function is as follows. Catalyzes the transfer of 4-deoxy-4-formamido-L-arabinose from UDP to undecaprenyl phosphate. The modified arabinose is attached to lipid A and is required for resistance to polymyxin and cationic antimicrobial peptides. The polypeptide is Undecaprenyl-phosphate 4-deoxy-4-formamido-L-arabinose transferase (Pseudomonas fluorescens (strain ATCC BAA-477 / NRRL B-23932 / Pf-5)).